Consider the following 434-residue polypeptide: Maltotriose-binding protein (434 aa).

The N-terminal stretch at 1–20 (MRRATYAFALLAILVLGVVA) is a signal peptide. Residues 28-52 (TTTPTQTSPATQPTTTQTPTQTETQ) form a disordered region. Residues 29–52 (TTPTQTSPATQPTTTQTPTQTETQ) are compositionally biased toward low complexity.

The protein belongs to the bacterial solute-binding protein 1 family.

Involved in an abc transport system for maltotriose. Binds maltotriose much more tightly than maltose. This is Maltotriose-binding protein (malE) from Pyrococcus furiosus (strain ATCC 43587 / DSM 3638 / JCM 8422 / Vc1).